A 129-amino-acid polypeptide reads, in one-letter code: Ig kappa chain V-IV region S107B (129 aa).

The signal sequence occupies residues 1–22 (MDLQVQIIXFLLISVTVIMSRG). Residues 23 to 45 (ENVLTQSPAIMAASLGQKVTMTC) form a framework-1 region. Cys45 and Cys111 are disulfide-bonded. A complementarity-determining-1 region spans residues 46-57 (SASSSVSSSYLH). The interval 58-72 (WYQQKSGASPKPLIH) is framework-2. Residues 73 to 79 (RTSNLAS) are complementarity-determining-2. The interval 80 to 111 (GVPARFSGSGSGTSYSLTISSVEAEDDATYYC) is framework-3. The complementarity-determining-3 stretch occupies residues 112-118 (QQWSGYP). The segment at 119-128 (FGSGTKLEIK) is framework-4.

In Mus musculus (Mouse), this protein is Ig kappa chain V-IV region S107B.